Consider the following 197-residue polypeptide: MSEKTIAVKAQKVDEVADMFSNSVSAVVADVRGLTVAQADDLRAQLRDEGVSLKVIKNKILTRAAEKAGYQELNDLFKGPSAIAFSKEDVVAPARILKKFSGTADALELKGGVIDRKVADLDTINRYAALPSKETLLQQLLAEFQSPLRSFMYAVKAVAEKREADGETAETPAQETASDDSKSTKAEASDASTTENK.

A disordered region spans residues 162 to 197 (READGETAETPAQETASDDSKSTKAEASDASTTENK). A compositionally biased stretch (basic and acidic residues) spans 179-188 (DDSKSTKAEA).

It belongs to the universal ribosomal protein uL10 family. In terms of assembly, part of the ribosomal stalk of the 50S ribosomal subunit. The N-terminus interacts with L11 and the large rRNA to form the base of the stalk. The C-terminus forms an elongated spine to which L12 dimers bind in a sequential fashion forming a multimeric L10(L12)X complex.

Forms part of the ribosomal stalk, playing a central role in the interaction of the ribosome with GTP-bound translation factors. This Oenococcus oeni (strain ATCC BAA-331 / PSU-1) protein is Large ribosomal subunit protein uL10.